The following is a 255-amino-acid chain: uncharacterized protein (255 aa).

Belongs to the IIV-6 155L family.

This is an uncharacterized protein from Acheta domesticus (House cricket).